The primary structure comprises 210 residues: Probable glutathione peroxidase 8 (210 aa).

The chain crosses the membrane as a helical span at residues Ala-13–Leu-35.

It belongs to the glutathione peroxidase family.

It localises to the membrane. The catalysed reaction is 2 glutathione + H2O2 = glutathione disulfide + 2 H2O. The chain is Probable glutathione peroxidase 8 (gpx8) from Danio rerio (Zebrafish).